The chain runs to 432 residues: FAD-dependent monooxygenase pynG (432 aa).

Positions 32, 103, 315, and 328 each coordinate FAD.

The protein belongs to the paxM FAD-dependent monooxygenase family. The cofactor is FAD.

Its pathway is secondary metabolite biosynthesis. FAD-dependent monooxygenase; part of the gene cluster that mediates the biosynthesis of pyranonigrins, a family of antioxidative compounds. The first step of pyranonigrins biosynthesis is performed by the hybrid PKS-NRPS synthetase that condenses 6 malonyl-CoA units to an acetyl starter unit, to form a 1,3,5-trioxotetradecane-6,8-dienyl-ACP. The enoyl reductase (ER) domain of pynA is likely to be functional during the first two rounds of polyketide chain extension, to generate the saturated C-C bonds of the alkyl side chain. PynA subsequently forms the amide bond between the acyl chain and L-serine. Although pynA has a terminal reductase domain, it appears to require the thioesterase pynI for the release of the straight-chain intermediate from pynA via the formation of a tetramic acid pyranonigrin J. The methyltransferase pynC then coverts pyranonigrin J to pyranonigrin I via N-methylation. The FAD-dependent monooxygenase pynG catalyzes an epoxidation-mediated cyclization to form the dihydro-gamma-pyrone moiety, followed by pynD-catalyzed oxidation of the alcohol to the ketone and enolization to yield the characteristic tetramic acid-fused gamma-pyrone core of pyranonigrin H. Pyranonigrin H is substrate of pynH for dehydration-mediated exo-methylene formation from the serine side chain to produce pyranonigrin E, before the oxidase pynE reduces the exo-methylene of pyranonigrin E into a pendant methyl to form pyranonigrin G. The FAD-linked oxidoreductase pynB performs the reverse reaction and converts pyranonigrin G back to pyranonigrin E. This chain is FAD-dependent monooxygenase pynG, found in Aspergillus niger (strain ATCC MYA-4892 / CBS 513.88 / FGSC A1513).